Here is a 968-residue protein sequence, read N- to C-terminus: RNA polymerase-associated protein RapA (968 aa).

The Helicase ATP-binding domain maps to 164–334; it reads EVGQRHAPRV…FARLRLLDPD (171 aa). 177 to 184 is a binding site for ATP; sequence DEVGLGKT. The DEAH box signature appears at 280 to 283; the sequence is DEAH. Positions 490-664 constitute a Helicase C-terminal domain; the sequence is RVEWLLNYLI…ATPSEQEGLD (175 aa).

Belongs to the SNF2/RAD54 helicase family. RapA subfamily. Interacts with the RNAP. Has a higher affinity for the core RNAP than for the holoenzyme. Its ATPase activity is stimulated by binding to RNAP.

In terms of biological role, transcription regulator that activates transcription by stimulating RNA polymerase (RNAP) recycling in case of stress conditions such as supercoiled DNA or high salt concentrations. Probably acts by releasing the RNAP, when it is trapped or immobilized on tightly supercoiled DNA. Does not activate transcription on linear DNA. Probably not involved in DNA repair. The polypeptide is RNA polymerase-associated protein RapA (Yersinia enterocolitica serotype O:8 / biotype 1B (strain NCTC 13174 / 8081)).